A 148-amino-acid chain; its full sequence is MEQTFIMIKPDGVQRGLVGEIISRFEKKGFSLKALKFINVDRPFAEKHYADLSAKPFFNGLVEYIVSGPVVAMVWEGKGVVLTGRKIIGATNPLASEPGTIRGDFAIDIGRNVIHGSDAVESATKEIALWFPEGVVNWQSSLHSWIYE.

6 residues coordinate ATP: K9, F57, R85, T91, R102, and N112. Catalysis depends on H115, which acts as the Pros-phosphohistidine intermediate.

The protein belongs to the NDK family. The cofactor is Mg(2+).

The enzyme catalyses a 2'-deoxyribonucleoside 5'-diphosphate + ATP = a 2'-deoxyribonucleoside 5'-triphosphate + ADP. It catalyses the reaction a ribonucleoside 5'-diphosphate + ATP = a ribonucleoside 5'-triphosphate + ADP. Its function is as follows. Major role in the synthesis of nucleoside triphosphates other than ATP. The ATP gamma phosphate is transferred to the NDP beta phosphate via a ping-pong mechanism, using a phosphorylated active-site intermediate. In Mesembryanthemum crystallinum (Common ice plant), this protein is Nucleoside diphosphate kinase 1 (NDKP1).